The primary structure comprises 510 residues: ATP synthase subunit alpha (510 aa).

An ATP-binding site is contributed by 169 to 176 (GDRQTGKT).

The protein belongs to the ATPase alpha/beta chains family. In terms of assembly, F-type ATPases have 2 components, CF(1) - the catalytic core - and CF(0) - the membrane proton channel. CF(1) has five subunits: alpha(3), beta(3), gamma(1), delta(1), epsilon(1). CF(0) has four main subunits: a(1), b(1), b'(1) and c(9-12).

It is found in the cell inner membrane. It catalyses the reaction ATP + H2O + 4 H(+)(in) = ADP + phosphate + 5 H(+)(out). In terms of biological role, produces ATP from ADP in the presence of a proton gradient across the membrane. The alpha chain is a regulatory subunit. In Rhodopseudomonas palustris (strain BisB5), this protein is ATP synthase subunit alpha.